Consider the following 141-residue polypeptide: Hemoglobin subunit alpha (141 aa).

The Globin domain maps to Val1–Arg141. Ser3 bears the Phosphoserine mark. An N6-succinyllysine mark is found at Lys7 and Lys11. N6-acetyllysine; alternate is present on Lys16. Lys16 carries the N6-succinyllysine; alternate modification. Tyr24 bears the Phosphotyrosine mark. Residue Ser35 is modified to Phosphoserine. An N6-succinyllysine modification is found at Lys40. Ser49 carries the post-translational modification Phosphoserine. Residue His58 coordinates O2. His87 contributes to the heme b binding site. Ser102 carries the post-translational modification Phosphoserine. Thr108 is modified (phosphothreonine). Ser124 and Ser131 each carry phosphoserine. 2 positions are modified to phosphothreonine: Thr134 and Thr137. Phosphoserine is present on Ser138.

The protein belongs to the globin family. In terms of assembly, heterotetramer of two alpha chains and two beta chains. Red blood cells.

Its function is as follows. Involved in oxygen transport from the lung to the various peripheral tissues. In terms of biological role, hemopressin acts as an antagonist peptide of the cannabinoid receptor CNR1. Hemopressin-binding efficiently blocks cannabinoid receptor CNR1 and subsequent signaling. This Mico argentatus (Silvery marmoset) protein is Hemoglobin subunit alpha (HBA).